The primary structure comprises 490 residues: MNLAEICDNAKKGREYALLGNYDSSMVYYQGVIQQIQRHCQSIRDPAVKGKWQQVRQELLEEYEQVKSIVSTLESFKIEKPPDFPVSCQDEPFRDPAVWPPPVPAEHRAPPQIRRPNREVRPLRKEMAGVGARGPVGRAHPISKSEKPSASRDKDCRARGRDDKGRKNMQDGASDGEIPKFDGAGYDKDLVEALERDIVSRNPSIHWDDIADLEEAKKLLREAVVLPMWMPDFFKGIRRPWKGVLMVGPPGTGKTMLAKAVATECGTTFFNVSSSTLTSKYRGESEKLVRLLFEMARFYAPTTIFIDEIDSICSRRGTSDEHEASRRVKSELLVQMDGVGGALENDDPSKMVMVLAATNFPWDIDEALRRRLEKRIYIPLPTAKGRAELLKISLREVELDPDIRLEDIAEKIEGYSGADITNVCRDASLMAMRRRINGLSPEEIRALSKEELQMPVTRGDFELALKKIAKSVSAADLEKYEKWMVEFGSA.

N-acetylmethionine is present on M1. Residues 96-182 (PAVWPPPVPA…ASDGEIPKFD (87 aa)) are disordered. Residues 116 to 127 (PNREVRPLRKEM) are compositionally biased toward basic and acidic residues. The segment covering 128–139 (AGVGARGPVGRA) has biased composition (low complexity). Over residues 143–169 (SKSEKPSASRDKDCRARGRDDKGRKNM) the composition is skewed to basic and acidic residues. S174 carries the post-translational modification Phosphoserine. 248 to 255 (GPPGTGKT) is an ATP binding site.

This sequence belongs to the AAA ATPase family. Katanin p60 subunit A1 subfamily. A-like 1 sub-subfamily. Interacts with KATNB1 and KATNBL1.

The protein resides in the cytoplasm. It localises to the cytoskeleton. It is found in the spindle pole. Its subcellular location is the spindle. It carries out the reaction n ATP + n H2O + a microtubule = n ADP + n phosphate + (n+1) alpha/beta tubulin heterodimers.. Regulates microtubule dynamics in Sertoli cells, a process that is essential for spermiogenesis and male fertility. Severs microtubules in an ATP-dependent manner, promoting rapid reorganization of cellular microtubule arrays. Has microtubule-severing activity in vitro. The polypeptide is Katanin p60 ATPase-containing subunit A-like 1 (Oryctolagus cuniculus (Rabbit)).